Here is a 783-residue protein sequence, read N- to C-terminus: Heat shock transcription factor (783 aa).

A disordered region spans residues 1-59 (MTTNLYAIAGPSKPTTPTSTPSPRSEPPSPLKSLTSLPTNPLNSHGTSTPNTLTNQLSS). Low complexity-rich tracts occupy residues 11-23 (PSKP…TPSP) and 31-42 (LKSLTSLPTNPL). The span at 43-59 (NSHGTSTPNTLTNQLSS) shows a compositional bias: polar residues. Residues 78–168 (MKVPAFLNKL…PIELWEFANP (91 aa)) mediate DNA binding. The disordered stretch occupies residues 181–262 (VTRKNNRPSN…PGSVPPSHTS (82 aa)). Composition is skewed to low complexity over residues 189-199 (SNSGVGPSSSV) and 209-233 (STRS…ISQG). The segment covering 238–262 (NHSTSGKYLITDGTTPGSVPPSHTS) has biased composition (polar residues). The tract at residues 280-333 (GIAAIRQTQASIATDLRKLQASNEALWRQAYETQEKQRKHEETIDLIVSFLERL) is involved in trimerization. Composition is skewed to basic and acidic residues over residues 350–372 (RGVG…SRFA) and 399–415 (TGEH…DRLV). Disordered regions lie at residues 350-554 (RGVG…LLSP), 599-652 (QALA…TLAL), and 736-783 (QGLA…KSES). Residues 418–448 (GSNSEYSIPSVKRTSSSSHPISLGQLGSSRF) are compositionally biased toward polar residues. Composition is skewed to low complexity over residues 452 to 467 (PSED…GSTS), 497 to 511 (LSPL…PSSS), 522 to 550 (PFPS…PSQP), and 616 to 632 (NPNG…AHGM). Residues 742 to 752 (GEEEGEREVEG) are compositionally biased toward acidic residues. Gly residues predominate over residues 753 to 765 (DGGVSSSGAGAGA).

It belongs to the HSF family. In terms of assembly, homotrimer. Homotrimerization increases the affinity of HSF1 to DNA. Interacts with transcriptional coregulator SSA1 on chromatin.

Its subcellular location is the nucleus. DNA-binding transcription factor that specifically binds heat shock promoter elements (HSE) and activates transcription. Together with its coregulator SSA1, activates expression of laccase LAC1 during glucose starvation. In Cryptococcus neoformans var. neoformans serotype D (strain JEC21 / ATCC MYA-565) (Filobasidiella neoformans), this protein is Heat shock transcription factor.